Consider the following 878-residue polypeptide: Phosphoenolpyruvate carboxylase (878 aa).

Catalysis depends on residues histidine 138 and lysine 545.

Belongs to the PEPCase type 1 family. The cofactor is Mg(2+).

The catalysed reaction is oxaloacetate + phosphate = phosphoenolpyruvate + hydrogencarbonate. Functionally, forms oxaloacetate, a four-carbon dicarboxylic acid source for the tricarboxylic acid cycle. The polypeptide is Phosphoenolpyruvate carboxylase (Shewanella sediminis (strain HAW-EB3)).